Consider the following 507-residue polypeptide: Histidine ammonia-lyase (507 aa).

Positions 141 to 143 form a cross-link, 5-imidazolinone (Ala-Gly); it reads ASG. 2,3-didehydroalanine (Ser) is present on S142.

It belongs to the PAL/histidase family. In terms of processing, contains an active site 4-methylidene-imidazol-5-one (MIO), which is formed autocatalytically by cyclization and dehydration of residues Ala-Ser-Gly.

It is found in the cytoplasm. It carries out the reaction L-histidine = trans-urocanate + NH4(+). The protein operates within amino-acid degradation; L-histidine degradation into L-glutamate; N-formimidoyl-L-glutamate from L-histidine: step 1/3. The chain is Histidine ammonia-lyase from Burkholderia mallei (strain NCTC 10247).